A 500-amino-acid polypeptide reads, in one-letter code: Kynurenine 3-monooxygenase acdD (500 aa).

FAD is bound by residues valine 17 and 36–38; that span reads ELR. N-linked (GlcNAc...) asparagine glycosylation occurs at asparagine 50. FAD is bound at residue alanine 58. The L-kynurenine site is built by arginine 89 and tyrosine 106. FAD contacts are provided by arginine 118 and leucine 143. Residue asparagine 163 is glycosylated (N-linked (GlcNAc...) asparagine). FAD contacts are provided by residues aspartate 321 and 332 to 335; that span reads QGLN. Positions 392 and 428 each coordinate L-kynurenine. The chain crosses the membrane as a helical span at residues 451 to 471; that stretch reads LLLYGSISAIISSAAIVGVLA.

This sequence belongs to the aromatic-ring hydroxylase family. KMO subfamily. It depends on FAD as a cofactor.

The protein localises to the mitochondrion outer membrane. It catalyses the reaction L-kynurenine + NADPH + O2 + H(+) = 3-hydroxy-L-kynurenine + NADP(+) + H2O. Its pathway is secondary metabolite biosynthesis. The protein operates within cofactor biosynthesis; NAD(+) biosynthesis; quinolinate from L-kynurenine: step 1/3. Its function is as follows. Indoleamine 2,3-dioxygenase; part of the gene cluster that mediates the biosynthesis of aspcandine, a pyrrolobenzazepine alkaloid. Initially, the indoleamine 2,3-dioxygenase acdA accepts L-tryptophan and performs the oxidative opening of the indole ring to yield N'-formyl-L-kynurenine, which undergoes the spontaneous deformylation reaction to provide L-kynurenine. The kynurenine 3-monooxygenase acdD then hydroxylates L-kynurenine to afford 3-hydroxy-L-kynurenine. 3-hydroxy-L-kynurenine is activated by the A domain of the NRPS-PKS acdB and subsequently loaded onto the enzyme. The KS domain conducts the decarboxylative condensation of the 3-hydroxy-L-kynurenyl and malonyl moieties, and subsequent nucleophilic attacks by the two amino groups would occur nonenzymatically at two distinct positions, achieving the chain release and the construction of the tricyclic system. Finally, the dehydration reaction completes the biosynthesis to yield aspcandine. The polypeptide is Kynurenine 3-monooxygenase acdD (Aspergillus candidus).